We begin with the raw amino-acid sequence, 342 residues long: P2Y purinoceptor 12 (342 aa).

Topologically, residues 1 to 27 are extracellular; it reads MQAVDNLTSAPGNTSLCTRDYKITQVL. N-linked (GlcNAc...) asparagine glycans are attached at residues N6 and N13. 2 disulfide bridges follow: C17–C270 and C97–C175. A helical membrane pass occupies residues 28-50; that stretch reads FPLLYTVLFFVGLITNGLAMRIF. Over 51-61 the chain is Cytoplasmic; sequence FQIRSKSNFII. 2 positions are modified to phosphoserine: S55 and S57. Residues 62–82 traverse the membrane as a helical segment; sequence FLKNTVISDLLMILTFPFKIL. Residues 83-97 are Extracellular-facing; the sequence is SDAKLGTGPLRTFVC. Residues R93, C97, and Y105 each contribute to the ADP site. The helical transmembrane segment at 98–118 threads the bilayer; that stretch reads QVTSVIFYFTMYISISFLGLI. At 119 to 142 the chain is on the cytoplasmic side; it reads TIDRYQKTTRPFKTSNPKNLLGAK. A helical membrane pass occupies residues 143–162; the sequence is ILSVVIWAFMFLLSLPNMIL. ADP is bound by residues 156–159, 175–179, H187, and N191; these read SLPN and CSFLK. Topologically, residues 163–185 are extracellular; sequence TNRQPRDKNVKKCSFLKSEFGLV. The chain crosses the membrane as a helical span at residues 186–207; it reads WHEIVNYICQVIFWINFLIVIV. At 208-233 the chain is on the cytoplasmic side; the sequence is CYTLITKELYRSYVRTRGVGKVPRKK. The helical transmembrane segment at 234–259 threads the bilayer; it reads VNVKVFIIIAVFFICFVPFHFARIPY. Residues 256 to 259, Q263, and K280 contribute to the ADP site; that span reads RIPY. The Extracellular portion of the chain corresponds to 260-278; it reads TLSQTRDVFDCTAENTLFY. Residues 279 to 298 form a helical membrane-spanning segment; the sequence is VKESTLWLTSLNACLDPFIY. Over 299–342 the chain is Cytoplasmic; that stretch reads FFLCKSFRNSLISMLKCPNSATSLSQDNRKKEQDGGDPNEETPM. The disordered stretch occupies residues 319 to 342; that stretch reads ATSLSQDNRKKEQDGGDPNEETPM. Residues 333–342 are compositionally biased toward acidic residues; the sequence is GGDPNEETPM.

This sequence belongs to the G-protein coupled receptor 1 family. Highly expressed in the platelets, lower levels in the brain. Lowest levels in the lung, appendix, pituitary and adrenal gland. Expressed in the spinal cord and in the fetal brain.

The protein resides in the cell membrane. Its function is as follows. Receptor for ADP and ATP coupled to G-proteins that inhibit the adenylyl cyclase second messenger system. Not activated by UDP and UTP. Required for normal platelet aggregation and blood coagulation. This is P2Y purinoceptor 12 (P2RY12) from Homo sapiens (Human).